We begin with the raw amino-acid sequence, 208 residues long: Uracil phosphoribosyltransferase (208 aa).

5-phospho-alpha-D-ribose 1-diphosphate is bound by residues R78, R103, and 130-138 (DPMLATGGS). Uracil contacts are provided by residues I193 and 198 to 200 (GDA). Residue D199 participates in 5-phospho-alpha-D-ribose 1-diphosphate binding.

It belongs to the UPRTase family. The cofactor is Mg(2+).

The enzyme catalyses UMP + diphosphate = 5-phospho-alpha-D-ribose 1-diphosphate + uracil. Its pathway is pyrimidine metabolism; UMP biosynthesis via salvage pathway; UMP from uracil: step 1/1. Allosterically activated by GTP. Functionally, catalyzes the conversion of uracil and 5-phospho-alpha-D-ribose 1-diphosphate (PRPP) to UMP and diphosphate. In Shewanella frigidimarina (strain NCIMB 400), this protein is Uracil phosphoribosyltransferase.